The chain runs to 224 residues: Urease accessory protein UreF (224 aa).

Belongs to the UreF family. In terms of assembly, ureD, UreF and UreG form a complex that acts as a GTP-hydrolysis-dependent molecular chaperone, activating the urease apoprotein by helping to assemble the nickel containing metallocenter of UreC. The UreE protein probably delivers the nickel.

The protein localises to the cytoplasm. Required for maturation of urease via the functional incorporation of the urease nickel metallocenter. In Pseudomonas savastanoi pv. phaseolicola (strain 1448A / Race 6) (Pseudomonas syringae pv. phaseolicola (strain 1448A / Race 6)), this protein is Urease accessory protein UreF.